The sequence spans 546 residues: Phosphatidylinositol 4-phosphate 5-kinase type-1 alpha (546 aa).

Positions 66 to 434 constitute a PIPK domain; sequence TSSALKGAIQ…RFQRFMCNTV (369 aa). Lys88 is covalently cross-linked (Glycyl lysine isopeptide (Lys-Gly) (interchain with G-Cter in ubiquitin)). 2 disordered regions span residues 442–475 and 491–518; these read PSPTKKFRSGPSFSRRSGPSGNSCTSQLMASGEH and LGRPDVLPQTPPLEEISEGSPVPGPSFS. Low complexity-rich tracts occupy residues 450–462 and 509–518; these read SGPSFSRRSGPSG and GSPVPGPSFS.

As to quaternary structure, interacts with RAC1. Interacts with TUT1. Forms a complex with CDH1/E-cadherin, CTNNB1/beta-catenin and CTNND1 at the plasma membrane upon calcium stimulation. Found in a ternary complex with IRS1 and DGKZ in the absence of insulin stimulation. Interacts with DGKZ. Interacts with PIP4K2C; the interaction inhibits PIP5K1A kinase activity. Highest expression in brain. Also detected in skeletal muscle, testis, brain and lung.

The protein localises to the cell membrane. The protein resides in the cytoplasm. It localises to the nucleus. It is found in the nucleus speckle. Its subcellular location is the cell projection. The protein localises to the ruffle. The protein resides in the lamellipodium. The catalysed reaction is a 1,2-diacyl-sn-glycero-3-phospho-(1D-myo-inositol 4-phosphate) + ATP = a 1,2-diacyl-sn-glycero-3-phospho-(1D-myo-inositol-4,5-bisphosphate) + ADP + H(+). It catalyses the reaction 1-octadecanoyl-2-(5Z,8Z,11Z,14Z)-eicosatetraenoyl-sn-glycero-3-phospho-1D-myo-inositol 4-phosphate + ATP = 1-octadecanoyl-2-(5Z,8Z,11Z,14Z)-eicosatetraenoyl-sn-glycero-3-phospho-1D-myo-inositol 4,5-bisphosphate + ADP + H(+). It carries out the reaction 1,2-dihexadecanoyl-sn-glycero-3-phospho-(1D-myo-inositol-4-phosphate) + ATP = 1,2-dihexadecanoyl-sn-glycero-3-phospho-(1D-myo-inositol-4,5-bisphosphate) + ADP + H(+). The enzyme catalyses 1-octadecanoyl-2-(9Z)-octadecenoyl-sn-glycero-3-phospho-1D-myo-inositol 4-phosphate + ATP = 1-octadecanoyl-2-(9Z)-octadecenoyl-sn-glycero-3-phospho-1D-myo-inositol 4,5-bisphosphate + ADP + H(+). The catalysed reaction is 1-octadecanoyl-2-(9Z)-octadecenoyl-sn-glycero-3-phospho-1D-myo-inositol + ATP = 1-octadecanoyl-2-(9Z)-octadecenoyl-sn-glycero-3-phospho-1D-myo-inositol 5-phosphate + ADP + H(+). It catalyses the reaction 1-octadecanoyl-2-(9Z,12Z)-octadecadienoyl-sn-glycero-3-phospho-1D-myo-inositol + ATP = 1-octadecanoyl-2-(9Z,12Z)-octadecadienoyl-sn-glycero-3-phospho-1D-myo-inositol 5-phosphate + ADP + H(+). It carries out the reaction 1-octadecanoyl-2-(5Z,8Z,11Z,14Z-eicosatetraenoyl)-sn-glycero-3-phospho-(1D-myo-inositol) + ATP = 1-octadecanoyl-2-(5Z,8Z,11Z,14Z)-eicosatetraenoyl-sn-glycero-3-phospho-1D-myo-inositol 5-phosphate + ADP + H(+). The enzyme catalyses 1,2-di-(9Z,12Z)-octadecadienoyl-sn-glycero-3-phospho-1D-myo-inositol + ATP = 1,2-di(9Z,12Z)-octadecadienoyl-sn-glycero-3-phospho-1D-myo-inositol 5-phosphate + ADP + H(+). Activated by phosphatidic acid. Catalyzes the phosphorylation of phosphatidylinositol 4-phosphate (PtdIns(4)P/PI4P) to form phosphatidylinositol 4,5-bisphosphate (PtdIns(4,5)P2/PIP2), a lipid second messenger that regulates several cellular processes such as signal transduction, vesicle trafficking, actin cytoskeleton dynamics, cell adhesion, and cell motility. PtdIns(4,5)P2 can directly act as a second messenger or can be utilized as a precursor to generate other second messengers: inositol 1,4,5-trisphosphate (IP3), diacylglycerol (DAG) or phosphatidylinositol-3,4,5-trisphosphate (PtdIns(3,4,5)P3/PIP3). PIP5K1A-mediated phosphorylation of PtdIns(4)P is the predominant pathway for PtdIns(4,5)P2 synthesis. Can also use phosphatidylinositol (PtdIns) as substrate in vitro. Together with PIP5K1C, is required for phagocytosis, both enzymes regulating different types of actin remodeling at sequential steps. Promotes particle ingestion by activating the WAS GTPase-binding protein that induces Arp2/3 dependent actin polymerization at the nascent phagocytic cup. Together with PIP5K1B, is required, after stimulation by G-protein coupled receptors, for the synthesis of IP3 that will induce stable platelet adhesion. Recruited to the plasma membrane by the E-cadherin/beta-catenin complex where it provides the substrate PtdIns(4,5)P2 for the production of PtdIns(3,4,5)P3, IP3 and DAG, that will mobilize internal calcium and drive keratinocyte differentiation. Positively regulates insulin-induced translocation of SLC2A4 to the cell membrane in adipocytes. Together with PIP5K1C has a role during embryogenesis. Independently of its catalytic activity, is required for membrane ruffling formation, actin organization and focal adhesion formation during directional cell migration by controlling integrin-induced translocation of the small GTPase RAC1 to the plasma membrane. Also functions in the nucleus where it acts as an activator of TUT1 adenylyltransferase activity in nuclear speckles, thereby regulating mRNA polyadenylation of a select set of mRNAs. This is Phosphatidylinositol 4-phosphate 5-kinase type-1 alpha from Mus musculus (Mouse).